Reading from the N-terminus, the 171-residue chain is Signal peptidase complex catalytic subunit SEC11 (171 aa).

Residues 1-6 lie on the Cytoplasmic side of the membrane; the sequence is MNIRQQ. The helical; Signal-anchor for type II membrane protein transmembrane segment at 7 to 24 threads the bilayer; that stretch reads LVQLLNLAMVLSTAFMFW. Residues 25–171 lie on the Lumenal side of the membrane; it reads KGLGLVTNSN…MALSTLLTRE (147 aa). Residues Ser-44, His-83, and Asp-113 each act as charge relay system in the active site. A C-terminal short (CTS) helix region spans residues 157 to 168; that stretch reads GLLGLMALSTLL.

This sequence belongs to the peptidase S26B family. In terms of assembly, component of the signal peptidase complex (SPC) composed of a catalytic subunit SEC11 and three accessory subunits SPC1, SPC2 and SPC3. The complex induces a local thinning of the ER membrane which is used to measure the length of the signal peptide (SP) h-region of protein substrates. This ensures the selectivity of the complex towards h-regions shorter than 18-20 amino acids. SPC associates with the translocon complex.

It is found in the endoplasmic reticulum membrane. The catalysed reaction is Cleavage of hydrophobic, N-terminal signal or leader sequences from secreted and periplasmic proteins.. Catalytic component of the signal peptidase complex (SPC) which catalyzes the cleavage of N-terminal signal sequences from nascent proteins as they are translocated into the lumen of the endoplasmic reticulum. Specifically cleaves N-terminal signal peptides that contain a hydrophobic alpha-helix (h-region) shorter than 18-20 amino acids. This Komagataella phaffii (strain GS115 / ATCC 20864) (Yeast) protein is Signal peptidase complex catalytic subunit SEC11 (SEC11).